A 346-amino-acid chain; its full sequence is Dimethylallyltranstransferase (346 aa).

Positions 96, 99, and 128 each coordinate isopentenyl diphosphate. Residues D135 and D141 each contribute to the Mg(2+) site. R147 contributes to the isopentenyl diphosphate binding site.

Belongs to the FPP/GGPP synthase family. The cofactor is Mg(2+).

The enzyme catalyses isopentenyl diphosphate + dimethylallyl diphosphate = (2E)-geranyl diphosphate + diphosphate. The protein operates within isoprenoid biosynthesis; geranyl diphosphate biosynthesis; geranyl diphosphate from dimethylallyl diphosphate and isopentenyl diphosphate: step 1/1. Its function is as follows. Prenyltransferase involved in the biosynthesis of ambiguines, a family of hapalindole-type alkaloids. Catalyzes the addition of isopentenyl diphosphate (IPP) onto dimethylallyl diphosphate (DMAPP) to form geranyl pyrophosphate (GPP). Cannot use farnesyl diphosphate (FPP) or geranylgeranyl diphosphate (GGPP). This Fischerella ambigua (strain UTEX 1903) protein is Dimethylallyltranstransferase.